Consider the following 606-residue polypeptide: UvrABC system protein C (606 aa).

Residues 19 to 97 enclose the GIY-YIG domain; sequence QSCGVYQMIG…IKSLKPPYNI (79 aa). The UVR domain maps to 207–242; that stretch reads EKVKKQLSSTMEKCSKEENYELAAIYRDRLKFLEQI.

Belongs to the UvrC family. As to quaternary structure, interacts with UvrB in an incision complex.

It is found in the cytoplasm. Functionally, the UvrABC repair system catalyzes the recognition and processing of DNA lesions. UvrC both incises the 5' and 3' sides of the lesion. The N-terminal half is responsible for the 3' incision and the C-terminal half is responsible for the 5' incision. This chain is UvrABC system protein C, found in Wolbachia sp. subsp. Brugia malayi (strain TRS).